A 570-amino-acid chain; its full sequence is MNGKFDKYEYLQDLMRRRGFAWGSFEIYGGSRGFYDYGPLGATIKRKIERKIREAFIREGFFEIETPDITPEQVFIASGHVEKFVDPVVECKKCGMRFRADHLIEEFLGIDVEGKSAEEMSRIIREHGLKCPECGGELSDVFYFNLMFETYIGPYKDKKAYLRPETAQGIFVNFKRLNAFARNKLPFGVFQIGKAYRNEISPRQGMIRLREFTQAEAEIFFNPNETEHPHFNEVKHEKLKLYPIENQLKELGEVEVTAEEAVKRGYVMNSFFAYYMVMIKKILLDIGIPEDKIRFRQQLPEERAHYSADTWDAEVYSERFGWVECVGLAYRTDYDLSRHMKMSGADLTVMIHYDKPKVVKRIQVSLNMKKVGPKLKADAKKINEIIKSMDQKELEKLVKDLNEKGKVTIEGYELSKEDFIVKEVEEKITGEKIVPHVLEPSFGIDRPFYLLLENSLTVDEDGRIYLKIKKDMAPIEVAVLPLVAKEPLTTIAYEIYRTLQKEGFIVVYDEKDSIGKRYMRYDEIGTPYCVTVDNQTPEDGTVTIRDRDTREQIRVKIEELPRKLKELIFG.

Residues arginine 99 and glutamate 165 each contribute to the substrate site. ATP-binding positions include 197–199, 207–212, 324–325, and 443–446; these read RNE, IRLREF, EC, and GIDR. 212–216 lines the substrate pocket; that stretch reads FTQAE. 439-443 contributes to the substrate binding site; the sequence is EPSFG.

Belongs to the class-II aminoacyl-tRNA synthetase family.

It is found in the cytoplasm. The enzyme catalyses tRNA(Gly) + glycine + ATP = glycyl-tRNA(Gly) + AMP + diphosphate. Its function is as follows. Catalyzes the attachment of glycine to tRNA(Gly). The protein is Glycine--tRNA ligase of Pyrococcus horikoshii (strain ATCC 700860 / DSM 12428 / JCM 9974 / NBRC 100139 / OT-3).